The primary structure comprises 335 residues: DNA-directed RNA polymerase subunit alpha (335 aa).

Residues 1-233 (MTRTANEFLT…QQIAIFVDLQ (233 aa)) are alpha N-terminal domain (alpha-NTD). The segment at 247-335 (VDPILLRPVD…MDDRFAYRSR (89 aa)) is alpha C-terminal domain (alpha-CTD).

Belongs to the RNA polymerase alpha chain family. As to quaternary structure, homodimer. The RNAP catalytic core consists of 2 alpha, 1 beta, 1 beta' and 1 omega subunit. When a sigma factor is associated with the core the holoenzyme is formed, which can initiate transcription.

It carries out the reaction RNA(n) + a ribonucleoside 5'-triphosphate = RNA(n+1) + diphosphate. Functionally, DNA-dependent RNA polymerase catalyzes the transcription of DNA into RNA using the four ribonucleoside triphosphates as substrates. The chain is DNA-directed RNA polymerase subunit alpha from Acinetobacter baylyi (strain ATCC 33305 / BD413 / ADP1).